A 341-amino-acid chain; its full sequence is tRNA N6-adenosine threonylcarbamoyltransferase (341 aa).

His-115 and His-119 together coordinate Fe cation. Residues 138–142 (VVSGG), Asp-171, Gly-184, Asp-188, and Asn-279 each bind substrate. Residue Asp-307 participates in Fe cation binding.

The protein belongs to the KAE1 / TsaD family. The cofactor is Fe(2+).

It localises to the cytoplasm. The catalysed reaction is L-threonylcarbamoyladenylate + adenosine(37) in tRNA = N(6)-L-threonylcarbamoyladenosine(37) in tRNA + AMP + H(+). Required for the formation of a threonylcarbamoyl group on adenosine at position 37 (t(6)A37) in tRNAs that read codons beginning with adenine. Is involved in the transfer of the threonylcarbamoyl moiety of threonylcarbamoyl-AMP (TC-AMP) to the N6 group of A37, together with TsaE and TsaB. TsaD likely plays a direct catalytic role in this reaction. The chain is tRNA N6-adenosine threonylcarbamoyltransferase from Clostridium novyi (strain NT).